A 159-amino-acid polypeptide reads, in one-letter code: Protein-export protein SecB (159 aa).

It belongs to the SecB family. In terms of assembly, homotetramer, a dimer of dimers. One homotetramer interacts with 1 SecA dimer.

The protein resides in the cytoplasm. Its function is as follows. One of the proteins required for the normal export of preproteins out of the cell cytoplasm. It is a molecular chaperone that binds to a subset of precursor proteins, maintaining them in a translocation-competent state. It also specifically binds to its receptor SecA. The chain is Protein-export protein SecB from Marinomonas sp. (strain MWYL1).